The primary structure comprises 263 residues: Putative hydro-lyase Pden_0321 (263 aa).

Belongs to the D-glutamate cyclase family.

The chain is Putative hydro-lyase Pden_0321 from Paracoccus denitrificans (strain Pd 1222).